Reading from the N-terminus, the 537-residue chain is Glucans biosynthesis protein D 2 (537 aa).

Positions 1-28 (MVTRRHLLASASLSATLAALGITPEALA) form a signal peptide, tat-type signal.

This sequence belongs to the OpgD/OpgG family. Post-translationally, predicted to be exported by the Tat system. The position of the signal peptide cleavage has not been experimentally proven.

Its subcellular location is the periplasm. Its pathway is glycan metabolism; osmoregulated periplasmic glucan (OPG) biosynthesis. Its function is as follows. Probably involved in the control of the structural glucose backbone of osmoregulated periplasmic glucans (OPGs). This Ralstonia nicotianae (strain ATCC BAA-1114 / GMI1000) (Ralstonia solanacearum) protein is Glucans biosynthesis protein D 2 (opgD2).